The chain runs to 469 residues: MMGSRRSRRVSWASGGNLCKVRLFLSEDSPSQAGLRPQDNLQAKGSWLLHAAGPSSDDSLPPGFESLPPSNDLKIDMSQIPLIRWKCPPHIVLEQDWHIVAGEESREIEIQNERINGALEAIYPRPSNIPPNPFLSLDVKDAHYDDSKTLLVPLIPLEDDDASDQLEGPTLDLPSHYNITGVSNTPVSAEQQPPCGGAISSGFTIEPQAAVSATVTAIMQTIQSNQNGSMADQNGSTIDQELLFKILSDPSQLQRLMKECGPVRHEQSASSSVVAPLVSIPPPQITASSPAPFSDHVGTFHGMNPTLPPPPPMMNRPPSTIPSVAMNHPPSSSPAMNFGSALPSSSPSVNFGSVPGRGVGYYKTLIHQHGGERLEQPFEQHGMQFGMYRQPGPPQNGGIDAMNGAAAMVSRDGKVRPMKPCAYFNSPKGCRNGASCTFLHDASAPTRKDHQKQKGSKRIKLDNTMGGRN.

The C3H1-type zinc finger occupies 415 to 443; it reads VRPMKPCAYFNSPKGCRNGASCTFLHDAS. The disordered stretch occupies residues 444–469; sequence APTRKDHQKQKGSKRIKLDNTMGGRN. The span at 449-458 shows a compositional bias: basic residues; the sequence is DHQKQKGSKR.

The sequence is that of Zinc finger CCCH domain-containing protein 30 from Oryza sativa subsp. japonica (Rice).